Reading from the N-terminus, the 546-residue chain is Chaperonin GroEL (546 aa).

ATP-binding positions include 29–32 (TLGP), Lys-50, 86–90 (DGTTT), Gly-414, and Asp-495. Residues 526 to 546 (AKEGAPAGGGMPDMGGMGGMM) are disordered. Positions 531–546 (PAGGGMPDMGGMGGMM) are enriched in gly residues.

This sequence belongs to the chaperonin (HSP60) family. Forms a cylinder of 14 subunits composed of two heptameric rings stacked back-to-back. Interacts with the co-chaperonin GroES.

The protein localises to the cytoplasm. The catalysed reaction is ATP + H2O + a folded polypeptide = ADP + phosphate + an unfolded polypeptide.. Its function is as follows. Together with its co-chaperonin GroES, plays an essential role in assisting protein folding. The GroEL-GroES system forms a nano-cage that allows encapsulation of the non-native substrate proteins and provides a physical environment optimized to promote and accelerate protein folding. This Jannaschia sp. (strain CCS1) protein is Chaperonin GroEL.